We begin with the raw amino-acid sequence, 95 residues long: Protein TusB (95 aa).

It belongs to the DsrH/TusB family. Heterohexamer, formed by a dimer of trimers. The hexameric TusBCD complex contains 2 copies each of TusB, TusC and TusD. The TusBCD complex interacts with TusE.

It is found in the cytoplasm. In terms of biological role, part of a sulfur-relay system required for 2-thiolation of 5-methylaminomethyl-2-thiouridine (mnm(5)s(2)U) at tRNA wobble positions. This is Protein TusB from Shigella sonnei (strain Ss046).